Reading from the N-terminus, the 443-residue chain is Trigger factor (443 aa).

The PPIase FKBP-type domain occupies 163–248; that stretch reads GDTAVIDFEG…INEIKAKELP (86 aa).

This sequence belongs to the FKBP-type PPIase family. Tig subfamily.

It localises to the cytoplasm. The enzyme catalyses [protein]-peptidylproline (omega=180) = [protein]-peptidylproline (omega=0). Functionally, involved in protein export. Acts as a chaperone by maintaining the newly synthesized protein in an open conformation. Functions as a peptidyl-prolyl cis-trans isomerase. This Agathobacter rectalis (strain ATCC 33656 / DSM 3377 / JCM 17463 / KCTC 5835 / VPI 0990) (Eubacterium rectale) protein is Trigger factor.